Reading from the N-terminus, the 103-residue chain is Sec-independent protein translocase protein TatA (103 aa).

A helical transmembrane segment spans residues 1–21; that stretch reads MSLGPWEIAIIVLLIIVLFGA. Positions 42-103 are disordered; that stretch reads VKEMQKDDET…QNYEDPNRTP (62 aa). Low complexity predominate over residues 52 to 90; the sequence is PAQPEQQPQGYQHPQQIEAPQNLQQPNFQQHYQNQPQQP. Residues 94–103 are compositionally biased toward basic and acidic residues; that stretch reads QNYEDPNRTP.

It belongs to the TatA/E family. As to quaternary structure, the Tat system comprises two distinct complexes: a TatABC complex, containing multiple copies of TatA, TatB and TatC subunits, and a separate TatA complex, containing only TatA subunits. Substrates initially bind to the TatABC complex, which probably triggers association of the separate TatA complex to form the active translocon.

The protein localises to the cell membrane. Its function is as follows. Part of the twin-arginine translocation (Tat) system that transports large folded proteins containing a characteristic twin-arginine motif in their signal peptide across membranes. TatA could form the protein-conducting channel of the Tat system. This chain is Sec-independent protein translocase protein TatA, found in Corynebacterium efficiens (strain DSM 44549 / YS-314 / AJ 12310 / JCM 11189 / NBRC 100395).